The primary structure comprises 2448 residues: Cysteine repeat modular protein 1 (2448 aa).

A helical membrane pass occupies residues 9 to 29 (TSTNLLNIFALYFSAICFIYC). 9 N-linked (GlcNAc...) asparagine glycosylation sites follow: Asn48, Asn89, Asn248, Asn284, Asn461, Asn503, Asn542, Asn598, and Asn619. FU repeat units follow at residues 431 to 481 (KNTC…GYYF), 485 to 530 (FMQC…GFYI), 535 to 566 (NFKC…FYLS), and 567 to 611 (SNTC…GQFA). 10 FU repeats span residues 645–694 (NNQC…GYFP), 698–727 (TSVC…YYLQ), 728–772 (DSNC…GTFG), 775–813 (QNIC…ITNN), 819–868 (KGMC…YYLS), 904–947 (GRVC…GFPD), 950–983 (QNVC…LNPA), 984–1027 (NNIC…RTYP), 1063–1109 (QGAC…NQYV), and 1113–1144 (QNRC…GFYL). Asn761 and Asn812 each carry an N-linked (GlcNAc...) asparagine glycan. Asn934 is a glycosylation site (N-linked (GlcNAc...) asparagine). An N-linked (GlcNAc...) asparagine glycan is attached at Asn1002. Asn1146 is a glycosylation site (N-linked (GlcNAc...) asparagine). One copy of the FU 15 repeat lies at 1147–1193 (QTQCSICDISCLQCSGPGFDSCIQCAQGYYKLGDSVCVQSCPDGFFL). An N-linked (GlcNAc...) asparagine glycan is attached at Asn1194. 5 FU repeats span residues 1197 to 1232 (NNQC…ISNQ), 1234 to 1279 (GIIC…GYRS), 1281 to 1332 (KGVC…GTFQ), 1346 to 1394 (SYYC…GFIL), and 1402 to 1436 (NQYC…GTVQ). N-linked (GlcNAc...) asparagine glycosylation is found at Asn1296, Asn1328, and Asn1365. Residues Asn1506, Asn1601, Asn1628, and Asn1670 are each glycosylated (N-linked (GlcNAc...) asparagine). Positions 1739-1773 (SDISCSLNLCMNSGKCVPNSIFCSCPSAFTGPKCQ) constitute an EGF-like domain. 3 disulfides stabilise this stretch: Cys1743–Cys1754, Cys1748–Cys1761, and Cys1763–Cys1772. Residues Asn1800, Asn1849, Asn1877, Asn1942, Asn2117, Asn2155, and Asn2179 are each glycosylated (N-linked (GlcNAc...) asparagine). Helical transmembrane passes span 2201-2221 (LYIM…YSAI) and 2238-2258 (IYFL…NQFV). An N-linked (GlcNAc...) asparagine glycan is attached at Asn2260. Transmembrane regions (helical) follow at residues 2267–2287 (SLTI…ILPF), 2296–2316 (ILTS…TIGV), 2352–2372 (MIGL…IGLC), and 2386–2406 (AVFL…IIVG).

The protein resides in the membrane. Functionally, required for mucocyst secretion. The protein is Cysteine repeat modular protein 1 of Tetrahymena thermophila (strain SB210).